The primary structure comprises 120 residues: Proteinase inhibitor (120 aa).

A signal peptide spans 1–19 (MKQLIIATLLSALSGGCMA). An intrachain disulfide couples Cys-43 to Cys-65.

The protein belongs to the protease inhibitor I38 family. Monomer.

Its subcellular location is the periplasm. Functionally, inhibitor of the extracellular proteases A, B, and C of E.chrysanthemi and the S.marcescens 50 kDa extracellular protease. It forms a non-covalent bond with the proteases and may prevent autocatalytic cleavage of the proteases zymogen in the periplasm. The sequence is that of Proteinase inhibitor (inh) from Dickeya chrysanthemi (Pectobacterium chrysanthemi).